A 255-amino-acid chain; its full sequence is 3-hydroxyacyl-CoA dehydrogenase type-2 (255 aa).

NAD(+) contacts are provided by S14, L16, D35, D58, V59, and C85. Position 149 (S149) interacts with substrate. The NAD(+) site is built by Y162, K166, F195, and T197. The active-site Proton acceptor is Y162.

Belongs to the short-chain dehydrogenases/reductases (SDR) family. In terms of assembly, component of mitochondrial ribonuclease P, a complex composed of rswl/MRPP1, scu/MRPP2 and mldr/MRPP3. In terms of tissue distribution, found in many tissues including CNS, imaginal disks and salivary glands. Highest expression in both embryonic gonadal primordia and mature ovaries and testes.

The protein localises to the mitochondrion. The enzyme catalyses a (3S)-3-hydroxyacyl-CoA + NAD(+) = a 3-oxoacyl-CoA + NADH + H(+). It catalyses the reaction (3S)-3-hydroxybutanoyl-CoA + NAD(+) = acetoacetyl-CoA + NADH + H(+). The catalysed reaction is testosterone + NAD(+) = androst-4-ene-3,17-dione + NADH + H(+). It carries out the reaction 5alpha-androstane-3alpha,17beta-diol + NAD(+) = 17beta-hydroxy-5alpha-androstan-3-one + NADH + H(+). The enzyme catalyses 17beta-estradiol + NAD(+) = estrone + NADH + H(+). It catalyses the reaction ursodeoxycholate + NAD(+) = 7-oxolithocholate + NADH + H(+). The catalysed reaction is 3beta,7beta-dihydroxy-5beta-cholan-24-oate + NAD(+) = 3beta-hydroxy-7-oxo-5beta-cholan-24-oate + NADH + H(+). It carries out the reaction 11-dehydrocorticosterone + NAD(+) = pregn-4-ene-3,11,20,21-tetraone + NADH + H(+). The enzyme catalyses cortisone + NAD(+) = 17alpha-hydroxypregn-4-en-3,11,20-trione-21-al + NADH + H(+). It catalyses the reaction cortisol + NAD(+) = 11beta,17alpha-dihydroxypregn-4-ene-3,20,21-trione + NADH + H(+). The catalysed reaction is 5alpha-pregnan-20beta-ol-3-one + NAD(+) = 5alpha-pregnane-3,20-dione + NADH + H(+). It carries out the reaction 17beta-hydroxy-5alpha-androstan-3-one + NAD(+) = 5alpha-androstan-3,17-dione + NADH + H(+). Functionally, mitochondrial dehydrogenase involved in pathways of fatty acid, and steroid metabolism. Versatile enzyme presenting two types of activity; L-3-hydroxyacyl-CoA dehydrogenase ((3S)-3-hydroxyacyl-CoA dehydrogenase) activity and hydroxysteroid dehydrogenase (HSD) activity with a wide substrate spectrum. As a (3S)-3-hydroxyacyl-CoA dehydrogenase, it functions in the third step of the fatty acid beta-oxidation pathway, a major metabolic process in which fatty acids are oxidized to provide a significant source of energy, while also generating acyl-CoA metabolites used by many metabolic routes. As a HSD, it functions in the degradation pathways of glucocorticoids and sex steroids and epimerization of bile acids; catalyzes the beta-oxidation at position 17 of androgens and estrogens, has 3-alpha-hydroxysteroid dehydrogenase activity with androsterone, and carries out oxidative conversions of 7-beta-hydroxylated bile acids like ursodeoxycholate or isoursodeoxycholate (also known as 3-beta,7-beta-dihydroxy-5-beta-cholan-24-oate or 7-beta-hydroxyisolithocholate, respectively). Also exhibits 20-beta-OH and 21-OH dehydrogenase activities with C21 steroids. Essential for structural and functional integrity of mitochondria. Required for cell survival during embryonic development. May play a role in germline formation. Its function is as follows. In addition to mitochondrial dehydrogenase activity, moonlights as a component of mitochondrial ribonuclease P, a complex that cleaves tRNA molecules in their 5'-ends. Essential for the structural and functional integrity of mitochondria. Function is essential for pupal development. The chain is 3-hydroxyacyl-CoA dehydrogenase type-2 from Drosophila melanogaster (Fruit fly).